Here is a 161-residue protein sequence, read N- to C-terminus: Ubiquitin-conjugating enzyme 15 (161 aa).

One can recognise a UBC core domain in the interval 15-161 (IACNRLQKEL…TRWWFHDDKV (147 aa)). Residue cysteine 99 is the Glycyl thioester intermediate of the active site.

It belongs to the ubiquitin-conjugating enzyme family.

It carries out the reaction S-ubiquitinyl-[E1 ubiquitin-activating enzyme]-L-cysteine + [E2 ubiquitin-conjugating enzyme]-L-cysteine = [E1 ubiquitin-activating enzyme]-L-cysteine + S-ubiquitinyl-[E2 ubiquitin-conjugating enzyme]-L-cysteine.. The protein operates within protein modification; protein ubiquitination. In terms of biological role, accepts the ubiquitin from the E1 complex and catalyzes its covalent attachment to other proteins. The polypeptide is Ubiquitin-conjugating enzyme 15 (UBC15) (Arabidopsis thaliana (Mouse-ear cress)).